The chain runs to 400 residues: Acetate kinase (400 aa).

Residue Asn10 coordinates Mg(2+). Lys17 is a binding site for ATP. Residue Arg91 participates in substrate binding. Asp148 functions as the Proton donor/acceptor in the catalytic mechanism. ATP-binding positions include 208-212 (HLGNG), 283-285 (DCR), and 331-335 (GIGEN). Residue Glu385 coordinates Mg(2+).

Belongs to the acetokinase family. As to quaternary structure, homodimer. Mg(2+) is required as a cofactor. Requires Mn(2+) as cofactor.

Its subcellular location is the cytoplasm. The enzyme catalyses acetate + ATP = acetyl phosphate + ADP. It participates in metabolic intermediate biosynthesis; acetyl-CoA biosynthesis; acetyl-CoA from acetate: step 1/2. Its function is as follows. Catalyzes the formation of acetyl phosphate from acetate and ATP. Can also catalyze the reverse reaction. The polypeptide is Acetate kinase (Shewanella putrefaciens (strain CN-32 / ATCC BAA-453)).